Reading from the N-terminus, the 158-residue chain is MIRIGHGFDVHAFGEDRPLIIGGVEVPYHTGFIAHSDGDVALHALTDAILGAAALGDIGKLFPDTDMQYKNADSRGLLREAFRQVQEKGYKIGNVDITIIAQAPKMRPHIDAMRAKIAEDIQCDIEQVNVKATTTEKLGFTGRQEGIACEAVALLIRQ.

Positions 9 and 11 each coordinate a divalent metal cation. 4-CDP-2-C-methyl-D-erythritol 2-phosphate contacts are provided by residues 9 to 11 (DVH) and 35 to 36 (HS). His43 serves as a coordination point for a divalent metal cation. Residues 57 to 59 (DIG), 62 to 66 (FPDTD), 133 to 136 (TTTE), Phe140, and Arg143 each bind 4-CDP-2-C-methyl-D-erythritol 2-phosphate.

It belongs to the IspF family. Homotrimer. A divalent metal cation is required as a cofactor.

The enzyme catalyses 4-CDP-2-C-methyl-D-erythritol 2-phosphate = 2-C-methyl-D-erythritol 2,4-cyclic diphosphate + CMP. It functions in the pathway isoprenoid biosynthesis; isopentenyl diphosphate biosynthesis via DXP pathway; isopentenyl diphosphate from 1-deoxy-D-xylulose 5-phosphate: step 4/6. Involved in the biosynthesis of isopentenyl diphosphate (IPP) and dimethylallyl diphosphate (DMAPP), two major building blocks of isoprenoid compounds. Catalyzes the conversion of 4-diphosphocytidyl-2-C-methyl-D-erythritol 2-phosphate (CDP-ME2P) to 2-C-methyl-D-erythritol 2,4-cyclodiphosphate (ME-CPP) with a corresponding release of cytidine 5-monophosphate (CMP). In Haemophilus influenzae (strain PittGG), this protein is 2-C-methyl-D-erythritol 2,4-cyclodiphosphate synthase.